The sequence spans 227 residues: UPF0173 metal-dependent hydrolase Saci_1512 (227 aa).

The protein belongs to the UPF0173 family.

This is UPF0173 metal-dependent hydrolase Saci_1512 from Sulfolobus acidocaldarius (strain ATCC 33909 / DSM 639 / JCM 8929 / NBRC 15157 / NCIMB 11770).